The following is a 292-amino-acid chain: MTIIIDGKKIANDLCERLSQKIDILKREYNIFPCLKVILIGSNPASQVYVRNKQKKAESIGISSETIVLPNNILEDELIEKINELNEDPSVHGILVQLPLPNHISASRVINTVSVEKDVDGFHDENVGKLVKGEKNCLIPCTPKGSLHLIKSIEENLSGKNAVVIGRSNIVGKPMFYLLLQENCTVTILHSQSKDLAEYCSKADIVVAAVGKPNFVQADWIKKGAIVIDVGINSVNVGKLVGDVDFEGIKGKAKAMTPVPGGVGPMTIAFLMMNTVIAACLQKGVDASDFIS.

NADP(+)-binding positions include 166–168, serine 191, and isoleucine 232; that span reads GRS.

Belongs to the tetrahydrofolate dehydrogenase/cyclohydrolase family. In terms of assembly, homodimer.

It carries out the reaction (6R)-5,10-methylene-5,6,7,8-tetrahydrofolate + NADP(+) = (6R)-5,10-methenyltetrahydrofolate + NADPH. It catalyses the reaction (6R)-5,10-methenyltetrahydrofolate + H2O = (6R)-10-formyltetrahydrofolate + H(+). Its pathway is one-carbon metabolism; tetrahydrofolate interconversion. In terms of biological role, catalyzes the oxidation of 5,10-methylenetetrahydrofolate to 5,10-methenyltetrahydrofolate and then the hydrolysis of 5,10-methenyltetrahydrofolate to 10-formyltetrahydrofolate. This chain is Bifunctional protein FolD, found in Wolbachia pipientis wMel.